Consider the following 424-residue polypeptide: CinA-like protein (424 aa).

The protein belongs to the CinA family.

This chain is CinA-like protein, found in Prochlorococcus marinus (strain MIT 9301).